A 1094-amino-acid polypeptide reads, in one-letter code: Transcriptional regulator CRZ1 (1094 aa).

Disordered stretches follow at residues 1 to 29, 44 to 81, 93 to 428, and 477 to 519; these read MADPASPPSFDAIFAQQPVRRSSSTSTSS, FNSDAPLVDEPQSLSEQARKQQRDPSKDGNNKRYLDMM, GRRQ…FPPS, and RAGA…RTLS. 2 stretches are compositionally biased toward basic and acidic residues: residues 60-78 and 94-103; these read QARKQQRDPSKDGNNKRYL and RRQESLRKES. S103 bears the Phosphoserine mark. Positions 148-159 are enriched in low complexity; that stretch reads PNQPQQPSQQPP. Polar residues-rich tracts occupy residues 166–187 and 201–217; these read SEQSVHYASVQQPQYSSFQSSG and GTTSSMNDSMLSSQISP. Composition is skewed to low complexity over residues 228-241 and 252-262; these read QPPQQQQQQQQQQQ and EQQQQYAQGEG. A compositionally biased stretch (polar residues) spans 286 to 324; it reads VISNTSHPSQYPSRTSSPFPQQSQSNMVPASTVNQTRTE. 2 positions are modified to phosphoserine: S288 and S329. The segment covering 325–342 has biased composition (low complexity); the sequence is SFPASRSPSPFAPQQASQ. 2 stretches are compositionally biased toward polar residues: residues 343–379 and 396–412; these read TEASNHVVSTPSMGQPTYPRASSSPRTNPNSPFFNKP and IVTQSTSNNHSKGLNQP. Residues 477-493 are compositionally biased toward low complexity; sequence RAGAARGAQRQGPQGQG. Polar residues predominate over residues 507 to 519; sequence PSPQSHPLPRTLS. S508, S569, S765, and S810 each carry phosphoserine. The tract at residues 835–888 is disordered; it reads ITGDDGSLLPPSNRGHAMSHSRHSSTSSIRSASPALSISSQGSSFSHHSPRMDM. The span at 858–881 shows a compositional bias: low complexity; that stretch reads SSTSSIRSASPALSISSQGSSFSH. The segment at 944-968 adopts a C2H2-type 1 zinc-finger fold; that stretch reads FKCPVPGCGSTFTRHFNLKGHLRSH. The C2H2-type 2; degenerate zinc-finger motif lies at 1007–1029; sequence FECEGCGKKFARLDALTRHHKSE. The interval 1037 to 1094 is disordered; the sequence is THPLPTNFDGSPMSESQYKTYKGIKSTPEGSGRRLSSTASGSGSGKRRSKKSETSEED.

Phosphorylated. Dephosphorylated by calcineurin (CNA1) which promotes nuclear localization.

The protein resides in the cytoplasm. The protein localises to the cytosol. It is found in the nucleus. In terms of biological role, DNA-binding transcriptional activator that interacts with calcineurin-dependent response element (CDRE) promoters. Activates expression of genes required to maintain cell wall integrity during stress. Activates expression of genes required for transepithelial migration through the host blood-brain barrier. Required for adaptation to host temperature during infection. This chain is Transcriptional regulator CRZ1, found in Cryptococcus neoformans var. grubii serotype A (strain H99 / ATCC 208821 / CBS 10515 / FGSC 9487) (Filobasidiella neoformans var. grubii).